The primary structure comprises 131 residues: Squamosa promoter-binding-like protein 3 (131 aa).

The span at 1–17 shows a compositional bias: basic and acidic residues; the sequence is MSMRRSKAEGKRSLREL. A disordered region spans residues 1–54; that stretch reads MSMRRSKAEGKRSLRELSEEEEEEEETEDEDTFEEEEALEKKQKGKATSSSGVC. Residues 18-38 are compositionally biased toward acidic residues; it reads SEEEEEEEETEDEDTFEEEEA. The tract at residues 45 to 129 is sufficient and necessary for DNA binding; the sequence is GKATSSSGVC…GHNERRRKST (85 aa). Residues 51 to 128 form an SBP-type zinc finger; the sequence is SGVCQVESCT…AGHNERRRKS (78 aa). The Zn(2+) site is built by cysteine 54, cysteine 59, cysteine 76, histidine 79, cysteine 95, cysteine 98, histidine 102, and cysteine 114. Residues 111 to 127 carry the Bipartite nuclear localization signal motif; the sequence is KRSCRRRLAGHNERRRK.

Zn(2+) serves as cofactor. In terms of tissue distribution, expressed in vegetative and inflorescence apical meristems, floral meristems, leaf and flower organ primordia, inflorescence stem tissue and to lower extent in roots.

It localises to the nucleus. It is found in the cytoplasm. Its function is as follows. Trans-acting factor that binds specifically to the consensus nucleotide sequence 5'-TNCGTACAA-3' of AP1 promoter. Binds specifically to the 5'-GTAC-3' core sequence. Promotes both vegetative phase change and flowering. Regulates phase-specific patterns of leaf epidermal differentiation and flowering time, but does not seem to affect leaf shape. The sequence is that of Squamosa promoter-binding-like protein 3 (SPL3) from Arabidopsis thaliana (Mouse-ear cress).